The sequence spans 402 residues: CinA-like protein (402 aa).

It belongs to the CinA family.

This Deinococcus deserti (strain DSM 17065 / CIP 109153 / LMG 22923 / VCD115) protein is CinA-like protein.